A 159-amino-acid polypeptide reads, in one-letter code: Serine-protein kinase RsbW (159 aa).

This sequence belongs to the anti-sigma-factor family.

The enzyme catalyses L-seryl-[protein] + ATP = O-phospho-L-seryl-[protein] + ADP + H(+). It catalyses the reaction L-threonyl-[protein] + ATP = O-phospho-L-threonyl-[protein] + ADP + H(+). Functionally, negative regulator of sigma-B activity. Phosphorylates and inactivates its specific antagonist protein, RsbV. Upon phosphorylation of RsbV, RsbW is released and binds to sigma-B, thereby blocking its ability to form an RNA polymerase holoenzyme (E-sigma-B). The chain is Serine-protein kinase RsbW from Staphylococcus aureus (strain Newman).